Reading from the N-terminus, the 237-residue chain is Sugar fermentation stimulation protein homolog (237 aa).

Belongs to the SfsA family.

This chain is Sugar fermentation stimulation protein homolog, found in Actinobacillus pleuropneumoniae serotype 3 (strain JL03).